Consider the following 453-residue polypeptide: CCA-adding enzyme (453 aa).

Residues Ser-53 and Lys-56 each contribute to the ATP site. The CTP site is built by Ser-53 and Lys-56. Mg(2+) contacts are provided by Asp-65, Asp-67, and Asp-119. Residues His-142, Lys-161, and Tyr-170 each contribute to the ATP site. CTP is bound by residues His-142, Lys-161, and Tyr-170.

This sequence belongs to the tRNA nucleotidyltransferase/poly(A) polymerase family. Archaeal CCA-adding enzyme subfamily. In terms of assembly, homodimer. Requires Mg(2+) as cofactor.

The catalysed reaction is a tRNA precursor + 2 CTP + ATP = a tRNA with a 3' CCA end + 3 diphosphate. It carries out the reaction a tRNA with a 3' CCA end + 2 CTP + ATP = a tRNA with a 3' CCACCA end + 3 diphosphate. Functionally, catalyzes the addition and repair of the essential 3'-terminal CCA sequence in tRNAs without using a nucleic acid template. Adds these three nucleotides in the order of C, C, and A to the tRNA nucleotide-73, using CTP and ATP as substrates and producing inorganic pyrophosphate. tRNA 3'-terminal CCA addition is required both for tRNA processing and repair. Also involved in tRNA surveillance by mediating tandem CCA addition to generate a CCACCA at the 3' terminus of unstable tRNAs. While stable tRNAs receive only 3'-terminal CCA, unstable tRNAs are marked with CCACCA and rapidly degraded. This is CCA-adding enzyme from Pyrococcus furiosus (strain ATCC 43587 / DSM 3638 / JCM 8422 / Vc1).